We begin with the raw amino-acid sequence, 403 residues long: Protein-export membrane protein SecD (403 aa).

6 helical membrane-spanning segments follow: residues 13-33 (LLVITAVWIVAATSLAVKGVN), 245-265 (FLKMAMIAGAIAFAAVSVIIA), 285-305 (VVFLIGLASLTGFTIDLPALA), 306-326 (GIILSIGSGVDDLIVITDEIV), 347-367 (VVLASFATLAAAMAVLFVAGM), and 368-388 (GLLKGFAIMTIAGAFYGVVIT).

It belongs to the SecD/SecF family. SecD subfamily. In terms of assembly, part of the protein translocation apparatus. Forms a complex with SecF.

The protein resides in the cell membrane. In terms of biological role, involved in protein export. This Methanopyrus kandleri (strain AV19 / DSM 6324 / JCM 9639 / NBRC 100938) protein is Protein-export membrane protein SecD.